Here is a 438-residue protein sequence, read N- to C-terminus: Exosome complex component RRP45B (438 aa).

Disordered stretches follow at residues 293–322 and 334–438; these read PTLA…RAAE and STEE…KNKS. Basic and acidic residues-rich tracts occupy residues 307–322 and 334–347; these read VKEE…RAAE and STEE…EEAA. Positions 380 to 394 are enriched in polar residues; the sequence is TKSSSTKKMNGSGNA. Over residues 410–429 the composition is skewed to basic and acidic residues; the sequence is LGKKDTKHKDGEMTLKDAVK.

This sequence belongs to the RNase PH family.

Its subcellular location is the cytoplasm. The protein resides in the nucleus. Its function is as follows. Probable 3'-&gt;5' exoribonuclease involved in the regulation of cuticular wax biosynthesis by controlling the expression of CER3. May act by degrading a specific mRNA species encoding a negative regulator of CER3 transcription. Can perform exosomal functions and complement the yeast rrp45 null mutant. The chain is Exosome complex component RRP45B from Arabidopsis thaliana (Mouse-ear cress).